The primary structure comprises 171 residues: Ribosome maturation factor RimP (171 aa).

Belongs to the RimP family.

Its subcellular location is the cytoplasm. Its function is as follows. Required for maturation of 30S ribosomal subunits. This is Ribosome maturation factor RimP from Anaeromyxobacter dehalogenans (strain 2CP-C).